The following is a 315-amino-acid chain: Methionyl-tRNA formyltransferase (315 aa).

113-116 lines the (6S)-5,6,7,8-tetrahydrofolate pocket; the sequence is SILP.

The protein belongs to the Fmt family.

The catalysed reaction is L-methionyl-tRNA(fMet) + (6R)-10-formyltetrahydrofolate = N-formyl-L-methionyl-tRNA(fMet) + (6S)-5,6,7,8-tetrahydrofolate + H(+). In terms of biological role, attaches a formyl group to the free amino group of methionyl-tRNA(fMet). The formyl group appears to play a dual role in the initiator identity of N-formylmethionyl-tRNA by promoting its recognition by IF2 and preventing the misappropriation of this tRNA by the elongation apparatus. The protein is Methionyl-tRNA formyltransferase of Vibrio cholerae serotype O1 (strain ATCC 39541 / Classical Ogawa 395 / O395).